Reading from the N-terminus, the 475-residue chain is GDP-fucose protein O-fucosyltransferase 3 (475 aa).

The Cytoplasmic portion of the chain corresponds to 1–8 (MVRMRRKR). The helical; Signal-anchor for type II membrane protein transmembrane segment at 9–29 (LWASCICFAAFFFLLVTLQVI) threads the bilayer. Residues 30-475 (TELGNSENKA…QEFWMLVFKQ (446 aa)) lie on the Lumenal side of the membrane. 3 N-linked (GlcNAc...) asparagine glycosylation sites follow: Asn-107, Asn-165, and Asn-315. The cysteines at positions 386 and 389 are disulfide-linked. N-linked (GlcNAc...) asparagine glycosylation is present at Asn-462.

This sequence belongs to the glycosyltransferase 10 family.

Its subcellular location is the endoplasmic reticulum membrane. The enzyme catalyses L-threonyl-[protein] + GDP-beta-L-fucose = 3-O-(alpha-L-fucosyl)-L-threonyl-[protein] + GDP + H(+). It catalyses the reaction L-seryl-[protein] + GDP-beta-L-fucose = 3-O-(alpha-L-fucosyl)-L-seryl-[protein] + GDP + H(+). Its pathway is protein modification; protein glycosylation. In terms of biological role, protein O-fucosyltransferase that specifically catalyzes O-fucosylation of serine or threonine residues in EMI domains of target proteins. Attaches fucose through an O-glycosidic linkage. O-fucosylation of EMI domain-containing proteins may be required for facilitating protein folding and secretion. The sequence is that of GDP-fucose protein O-fucosyltransferase 3 (FUT10) from Gallus gallus (Chicken).